Reading from the N-terminus, the 241-residue chain is DNA repair protein RecO (241 aa).

It belongs to the RecO family.

Its function is as follows. Involved in DNA repair and RecF pathway recombination. The protein is DNA repair protein RecO of Vibrio cholerae serotype O1 (strain ATCC 39541 / Classical Ogawa 395 / O395).